Here is a 277-residue protein sequence, read N- to C-terminus: uncharacterized protein (277 aa).

The segment at 1–20 (MVTTSPPPTLTNSVQPHPTT) is disordered.

This is an uncharacterized protein from Acidianus convivator (ATV).